Reading from the N-terminus, the 328-residue chain is MKQVFVDLRPWDKELAIAALESGAAGVIADSAGPVRELGRILVIAPDGDLIPGQDIHEITIGNTEDQARAMEAARTCRIIVHTPDWTIIPLENLVACGDNVIAVVSDIKEAEQALTVLEKGVSGVLVKTDDPDLVRSICRMVQSGISGQQLHRLTVTTVKPAGMGERVCVDTCSLMVDGEGMLVGNTSSGFFLVHAETLVNPYVAPRPFRVNAGGVHAYLQVPEGKTAYLADLKAGDRVMIVHGNGSCREATVGRVKIERRPLFLVEAESECQKVSIILQNAETIRLVRPDNSAVSVTSLKPGDVVLGRVESGGRHFGMAIDETIIEK.

The protein belongs to the archaeal-type DHQ synthase family.

It carries out the reaction 2-amino-2,3,7-trideoxy-D-lyxo-hept-6-ulosonate + NAD(+) + H2O = 3-dehydroquinate + NH4(+) + NADH + H(+). Catalyzes the oxidative deamination and cyclization of 2-amino-3,7-dideoxy-D-threo-hept-6-ulosonic acid (ADH) to yield 3-dehydroquinate (DHQ), which is fed into the canonical shikimic pathway of aromatic amino acid biosynthesis. This Methanospirillum hungatei JF-1 (strain ATCC 27890 / DSM 864 / NBRC 100397 / JF-1) protein is 3-dehydroquinate synthase.